A 387-amino-acid polypeptide reads, in one-letter code: Pepsin II-2/3 (387 aa).

Residues 1-15 form the signal peptide; sequence MKWLLLLGLLALSEC. Residues 16 to 59 constitute a propeptide, activation peptide; it reads IVHKVPLVRKKSLRKNLIEKGLLQDYLKTHTPNPATKYFPKETF. Positions 75 to 384 constitute a Peptidase A1 domain; sequence YFGTISIGTP…DRANNQLGLA (310 aa). Aspartate 93 is an active-site residue. Cysteine 106 and cysteine 111 form a disulfide bridge. A Phosphoserine modification is found at serine 129. A disulfide bond links cysteine 267 and cysteine 271. Aspartate 276 is an active-site residue. A disulfide bridge connects residues cysteine 310 and cysteine 343.

The protein belongs to the peptidase A1 family.

The protein resides in the secreted. It carries out the reaction Preferential cleavage: hydrophobic, preferably aromatic, residues in P1 and P1' positions. Cleaves 1-Phe-|-Val-2, 4-Gln-|-His-5, 13-Glu-|-Ala-14, 14-Ala-|-Leu-15, 15-Leu-|-Tyr-16, 16-Tyr-|-Leu-17, 23-Gly-|-Phe-24, 24-Phe-|-Phe-25 and 25-Phe-|-Tyr-26 bonds in the B chain of insulin.. In terms of biological role, shows particularly broad specificity; although bonds involving phenylalanine and leucine are preferred, many others are also cleaved to some extent. The polypeptide is Pepsin II-2/3 (Oryctolagus cuniculus (Rabbit)).